We begin with the raw amino-acid sequence, 161 residues long: MHKTAIYPGTFDPLTNGHMDIIRRASMIFDTLIVAVAKSATKEPMFPLSEREEMLRLATRECPSVRVESFDTLLADFAQERGACILVRGLRAVSDFEYELQMGYANASLNPALETIYLMPSLQNAFISSSVIRSILLHKGKISHLVPPVVCEYIQKRRSCM.

Substrate is bound at residue Thr-10. Residues 10 to 11 and His-18 each bind ATP; that span reads TF. Residues Lys-42, Leu-74, and Arg-88 each contribute to the substrate site. Residues 89 to 91, Glu-99, and 124 to 130 contribute to the ATP site; these read GLR and NAFISSS.

It belongs to the bacterial CoaD family. Homohexamer. The cofactor is Mg(2+).

Its subcellular location is the cytoplasm. The enzyme catalyses (R)-4'-phosphopantetheine + ATP + H(+) = 3'-dephospho-CoA + diphosphate. It participates in cofactor biosynthesis; coenzyme A biosynthesis; CoA from (R)-pantothenate: step 4/5. In terms of biological role, reversibly transfers an adenylyl group from ATP to 4'-phosphopantetheine, yielding dephospho-CoA (dPCoA) and pyrophosphate. In Wolinella succinogenes (strain ATCC 29543 / DSM 1740 / CCUG 13145 / JCM 31913 / LMG 7466 / NCTC 11488 / FDC 602W) (Vibrio succinogenes), this protein is Phosphopantetheine adenylyltransferase.